Consider the following 140-residue polypeptide: MKFTKIATPEQIDQKWVLIDAEGKTFGRIITEVATLLRGKNKPCFTPNIDCGDYVVVVNASKAKFNGLGKIANKEYFSYSGYFGSVKSTKMTELLEKNPEKLYKLATRGMLPKTKLGAKMIKKLKIYASAEHPHSAQLAK.

Belongs to the universal ribosomal protein uL13 family. Part of the 50S ribosomal subunit.

This protein is one of the early assembly proteins of the 50S ribosomal subunit, although it is not seen to bind rRNA by itself. It is important during the early stages of 50S assembly. This Sulfurimonas denitrificans (strain ATCC 33889 / DSM 1251) (Thiomicrospira denitrificans (strain ATCC 33889 / DSM 1251)) protein is Large ribosomal subunit protein uL13.